An 810-amino-acid chain; its full sequence is AMP deaminase (810 aa).

Over residues 1–10 (MDNQATQRLN) the composition is skewed to polar residues. Disordered stretches follow at residues 1 to 61 (MDNQ…SHES) and 114 to 137 (AAMN…PRTL). 3 positions are modified to phosphoserine: Ser-19, Ser-58, and Ser-61. Over residues 125–137 (HASQNSGGKPRTL) the composition is skewed to polar residues. The residue at position 138 (Ser-138) is a Phosphoserine. His-362 and His-364 together coordinate Zn(2+). Substrate is bound by residues His-364 and 433–438 (KFNLKY). His-630 is a Zn(2+) binding site. Residue Glu-633 participates in substrate binding. The active-site Proton acceptor is His-652. Asp-707 lines the Zn(2+) pocket. 708 to 711 (DPLQ) serves as a coordination point for substrate.

It belongs to the metallo-dependent hydrolases superfamily. Adenosine and AMP deaminases family. As to quaternary structure, homotetramer. Zn(2+) serves as cofactor.

The enzyme catalyses AMP + H2O + H(+) = IMP + NH4(+). Its pathway is purine metabolism; IMP biosynthesis via salvage pathway; IMP from AMP: step 1/1. AMP deaminase plays a critical role in energy metabolism. The sequence is that of AMP deaminase (AMD1) from Saccharomyces cerevisiae (strain ATCC 204508 / S288c) (Baker's yeast).